Reading from the N-terminus, the 76-residue chain is Sec-independent protein translocase protein TatA (76 aa).

A helical membrane pass occupies residues 1–21; that stretch reads MGGISIWQLLIIVAIIVLLFG. The segment at 43–76 is disordered; that stretch reads MADDKSQPQDASFEKVEAKEAASTEQKAKEKEQA.

This sequence belongs to the TatA/E family. In terms of assembly, the Tat system comprises two distinct complexes: a TatABC complex, containing multiple copies of TatA, TatB and TatC subunits, and a separate TatA complex, containing only TatA subunits. Substrates initially bind to the TatABC complex, which probably triggers association of the separate TatA complex to form the active translocon.

It localises to the cell inner membrane. Functionally, part of the twin-arginine translocation (Tat) system that transports large folded proteins containing a characteristic twin-arginine motif in their signal peptide across membranes. TatA could form the protein-conducting channel of the Tat system. In Actinobacillus pleuropneumoniae serotype 5b (strain L20), this protein is Sec-independent protein translocase protein TatA.